Reading from the N-terminus, the 596-residue chain is Phosphoenolpyruvate carboxykinase [GTP] (596 aa).

Substrate is bound by residues Arg77 and 205 to 207 (YGG). Mn(2+) is bound by residues Lys214 and His234. Ser256 serves as a coordination point for substrate. 257 to 262 (ACGKTN) is a GTP binding site. Cys258 is an active-site residue. Asp283 provides a ligand contact to Mn(2+). Residues 362-388 (KKGSTEKAAHPNSRFTAPAKNNPAISP) form a disordered region. 373-375 (NSR) contributes to the substrate binding site. GTP contacts are provided by residues Arg375, Arg406, and 499–502 (YGDN).

The protein belongs to the phosphoenolpyruvate carboxykinase [GTP] family. As to quaternary structure, monomer. Mn(2+) is required as a cofactor.

It localises to the cytoplasm. The catalysed reaction is oxaloacetate + GTP = phosphoenolpyruvate + GDP + CO2. Its pathway is carbohydrate biosynthesis; gluconeogenesis. Its function is as follows. Catalyzes the conversion of oxaloacetate (OAA) to phosphoenolpyruvate (PEP), the rate-limiting step in the metabolic pathway that produces glucose from lactate and other precursors derived from the citric acid cycle. This is Phosphoenolpyruvate carboxykinase [GTP] from Anaeromyxobacter sp. (strain K).